The chain runs to 888 residues: Protein translocase subunit SecA (888 aa).

ATP contacts are provided by residues Q81, 99-103, and D489; that span reads GEGKT.

This sequence belongs to the SecA family.

The protein resides in the plastid. It localises to the chloroplast stroma. The protein localises to the chloroplast thylakoid membrane. The catalysed reaction is ATP + H2O + cellular proteinSide 1 = ADP + phosphate + cellular proteinSide 2.. Its function is as follows. Has a central role in coupling the hydrolysis of ATP to the transfer of proteins across the thylakoid membrane. The polypeptide is Protein translocase subunit SecA (Trieres chinensis (Marine centric diatom)).